The primary structure comprises 729 residues: MSCCDLAAAGQLGKASIMASDCEPALNQAEGRNPTLERYLGALREAKNDSEQFAALLLVTKAVKAGDIDAKTRRRIFDAVGFTFPNRLLTTKEAPDGCPDHVLRALGVALLACFCSDPELAAHPQVLNKIPILSTFLTARGDPDDAARRSMIDDTYQCLTAVAGTPRGPRHLIAGGTVSALCQAYLGHGYGFDQALALLVGLLAAAETQCWKEAEPDLLAVLRGLSEDFQKAEDASKFELCQLLPLFLPPTTVPPECYRDLQAGLARILGSKLSSWQRNPALKLAARLAHACGSDWIPAGSSGSKFLALLVNLACVEVRLALEETGTEVKEDVVTACYALMELGIQECTRCEQSLLKEPQKVQLVSVMKEAIGAVIHYLLQVGSEKQKEPFVFASVRILGAWLAEETSSLRKEVCQLLPFLVRYAKTLYEEAEEANDLSQQVANLAISPTTPGPTWPGDALRLLLPGWCHLTVEDGPREILIKEGAPSLLCKYFLQQWELTSPGHDTSVLPDSVEIGLQTCCHIFLNLVVTAPGLIKRDACFTSLMNTLMTSLPALVQQQGRLLLAANVATLGLLMARLLSTSPALQGTPASRGFFAAAILFLSQSHVARATPGSDQAVLALSPEYEGIWADLQELWFLGMQAFTGCVPLLPWLAPAALRSRWPQELLQLLGSVSPNSVKPEMVAAYQGVLVELARANRLCREAMRLQAGEETASHYRMAALEQCLSEP.

S2 is subject to N-acetylserine. S2 carries the phosphoserine modification. At S2 the chain carries N-acetylalanine. 2 S-palmitoyl cysteine lipidation sites follow: C3 and C4. R75 bears the Asymmetric dimethylarginine mark. Phosphoserine is present on S448.

This sequence belongs to the neurochondrin family. Interacts with MCHR1. Interacts with SEMA4C. Interacts with DIAPH1 (via FH3 domain). Interacts with GRM5. Post-translationally, palmitoylated. Palmitoylation by ZDHHC1, ZDHHC3 and ZDHHC11 regulates the association of NCDN with endosome membranes. May also be palmitoylated by ZDHHC7. Abundantly expressed in whole adult brain and in all individual brain regions examined, including spinal cord. Weakly expressed in ovary, testis, fetal brain and small intestine.

The protein localises to the cytoplasm. It localises to the cytosol. The protein resides in the endosome membrane. It is found in the cell projection. Its subcellular location is the dendrite. The protein localises to the postsynapse. In terms of biological role, probably involved in signal transduction in the nervous system, via increasing cell surface localization of GRM5/mGluR5 and positively regulating its signaling. Required for the spatial learning process. Acts as a negative regulator of Ca(2+)-calmodulin-dependent protein kinase 2 (CaMK2) phosphorylation. May play a role in modulating melanin-concentrating hormone-mediated functions via its interaction with MCHR1 that interferes with G protein-coupled signal transduction. May be involved in bone metabolism. May also be involved in neurite outgrowth. The protein is Neurochondrin of Homo sapiens (Human).